The following is an 820-amino-acid chain: Phenylalanine--tRNA ligase beta subunit (820 aa).

The region spanning 42-154 (KGGLEGLVIG…EDAVPGTLAK (113 aa)) is the tRNA-binding domain. A B5 domain is found at 413–489 (AQDFIVELTY…RIYGYNNVEI (77 aa)). 4 residues coordinate Mg(2+): Asp-467, Asp-473, Glu-476, and Asp-477. An FDX-ACB domain is found at 727 to 820 (SKFPAVKRDL…LEDKLGAKLR (94 aa)).

This sequence belongs to the phenylalanyl-tRNA synthetase beta subunit family. Type 1 subfamily. As to quaternary structure, tetramer of two alpha and two beta subunits. Mg(2+) serves as cofactor.

Its subcellular location is the cytoplasm. The catalysed reaction is tRNA(Phe) + L-phenylalanine + ATP = L-phenylalanyl-tRNA(Phe) + AMP + diphosphate + H(+). In Bacteroides fragilis (strain YCH46), this protein is Phenylalanine--tRNA ligase beta subunit.